The sequence spans 1505 residues: Myosin-6 (1505 aa).

Residues S8–V57 enclose the Myosin N-terminal SH3-like domain. Residues S62 to T731 enclose the Myosin motor domain. ATP contacts are provided by residues G156–T163 and N209–K217. Actin-binding stretches follow at residues L495–F529, T531–V554, F589–L612, and L612–N634. 6 consecutive IQ domains span residues L734–Q763, L757–A786, R782–S811, L805–A834, Q830–T859, and L853–E882. Residues T883–T1048 adopt a coiled-coil conformation. The Dilute domain maps to D1148–E1452.

The protein belongs to the TRAFAC class myosin-kinesin ATPase superfamily. Myosin family. Plant myosin class XI subfamily. In terms of assembly, homodimer. Interacts with RABC2A and RABD1. In terms of tissue distribution, expressed in flowers, leaves, roots and stems.

It localises to the cytoplasm. In terms of biological role, myosin heavy chain that is required for the cell cycle-regulated transport of various organelles and proteins for their segregation. Functions by binding with its tail domain to receptor proteins on organelles and exerting force with its N-terminal motor domain against actin filaments, thereby transporting its cargo along polarized actin cables. Involved in the tip growth of root hair cells. Plays a major role in trafficking of Golgi stacks, mitochondria and peroxisomes during root hair development. Targets the peroxisome through an interaction with RABC2A. Required for development of pavement cells, trichomes, and stigmatic papillae. The chain is Myosin-6 (XI-2) from Arabidopsis thaliana (Mouse-ear cress).